We begin with the raw amino-acid sequence, 824 residues long: Glycerol-3-phosphate acyltransferase (824 aa).

The short motif at 302–307 (CHRSHM) is the HXXXXD motif element.

This sequence belongs to the GPAT/DAPAT family.

It localises to the cell inner membrane. It catalyses the reaction sn-glycerol 3-phosphate + an acyl-CoA = a 1-acyl-sn-glycero-3-phosphate + CoA. Its pathway is phospholipid metabolism; CDP-diacylglycerol biosynthesis; CDP-diacylglycerol from sn-glycerol 3-phosphate: step 1/3. This chain is Glycerol-3-phosphate acyltransferase, found in Actinobacillus pleuropneumoniae serotype 3 (strain JL03).